The following is a 145-amino-acid chain: Large ribosomal subunit protein uL13 (145 aa).

The protein belongs to the universal ribosomal protein uL13 family. As to quaternary structure, part of the 50S ribosomal subunit.

Functionally, this protein is one of the early assembly proteins of the 50S ribosomal subunit, although it is not seen to bind rRNA by itself. It is important during the early stages of 50S assembly. The chain is Large ribosomal subunit protein uL13 from Bacillus cereus (strain G9842).